The following is a 187-amino-acid chain: Large ribosomal subunit protein uL5 (187 aa).

This sequence belongs to the universal ribosomal protein uL5 family. As to quaternary structure, part of the 50S ribosomal subunit; part of the 5S rRNA/L5/L18/L25 subcomplex. Contacts the 5S rRNA and the P site tRNA. Forms a bridge to the 30S subunit in the 70S ribosome.

This is one of the proteins that bind and probably mediate the attachment of the 5S RNA into the large ribosomal subunit, where it forms part of the central protuberance. In the 70S ribosome it contacts protein S13 of the 30S subunit (bridge B1b), connecting the 2 subunits; this bridge is implicated in subunit movement. Contacts the P site tRNA; the 5S rRNA and some of its associated proteins might help stabilize positioning of ribosome-bound tRNAs. This chain is Large ribosomal subunit protein uL5, found in Mycobacterium leprae (strain Br4923).